Consider the following 399-residue polypeptide: Acetate kinase (399 aa).

Asn-7 provides a ligand contact to Mg(2+). ATP is bound at residue Lys-14. Arg-91 contributes to the substrate binding site. Catalysis depends on Asp-148, which acts as the Proton donor/acceptor. ATP contacts are provided by residues 208–212 (HLGNG), 283–285 (DFR), and 331–335 (GIGEN). Glu-384 contacts Mg(2+).

Belongs to the acetokinase family. Homodimer. Mg(2+) serves as cofactor. Requires Mn(2+) as cofactor.

It localises to the cytoplasm. The enzyme catalyses acetate + ATP = acetyl phosphate + ADP. Its pathway is metabolic intermediate biosynthesis; acetyl-CoA biosynthesis; acetyl-CoA from acetate: step 1/2. Its function is as follows. Catalyzes the formation of acetyl phosphate from acetate and ATP. Can also catalyze the reverse reaction. The sequence is that of Acetate kinase from Acetivibrio thermocellus (strain ATCC 27405 / DSM 1237 / JCM 9322 / NBRC 103400 / NCIMB 10682 / NRRL B-4536 / VPI 7372) (Clostridium thermocellum).